We begin with the raw amino-acid sequence, 287 residues long: uncharacterized protein (287 aa).

The next 2 helical transmembrane spans lie at 12-32 (IILL…GAAL) and 217-237 (YTIG…VLIV).

It localises to the cell membrane. This is an uncharacterized protein from Mycoplasma pneumoniae (strain ATCC 29342 / M129 / Subtype 1) (Mycoplasmoides pneumoniae).